The following is a 101-amino-acid chain: Ubiquitin-related modifier 1 (101 aa).

A 1-thioglycine modification is found at G101. Residue G101 forms a Glycyl lysine isopeptide (Gly-Lys) (interchain with K-? in acceptor proteins) linkage.

It belongs to the URM1 family. As to quaternary structure, component of a complex at least composed of URM1, CTU2/NCS2 and CTU1/ATPBD3. Post-translationally, C-terminal thiocarboxylation occurs in 2 steps, it is first acyl-adenylated (-COAMP) via the hesA/moeB/thiF part of MOCS3, then thiocarboxylated (-COSH) via the rhodanese domain of MOCS3.

It is found in the cytoplasm. It participates in tRNA modification; 5-methoxycarbonylmethyl-2-thiouridine-tRNA biosynthesis. Acts as a sulfur carrier required for 2-thiolation of mcm(5)S(2)U at tRNA wobble positions of cytosolic tRNA(Lys), tRNA(Glu) and tRNA(Gln). Serves as sulfur donor in tRNA 2-thiolation reaction by being thiocarboxylated (-COSH) at its C-terminus by MOCS3. The sulfur is then transferred to tRNA to form 2-thiolation of mcm(5)S(2)U. Also acts as a ubiquitin-like protein (UBL) that is covalently conjugated via an isopeptide bond to lysine residues of target proteins such as MOCS3, ATPBD3, CTU2, USP15 and CAS. The thiocarboxylated form serves as substrate for conjugation and oxidative stress specifically induces the formation of UBL-protein conjugates. This chain is Ubiquitin-related modifier 1, found in Bos taurus (Bovine).